A 251-amino-acid chain; its full sequence is Ubiquinone biosynthesis O-methyltransferase (251 aa).

Arginine 36, glycine 61, aspartate 82, and isoleucine 124 together coordinate S-adenosyl-L-methionine.

This sequence belongs to the methyltransferase superfamily. UbiG/COQ3 family.

It carries out the reaction a 3-demethylubiquinol + S-adenosyl-L-methionine = a ubiquinol + S-adenosyl-L-homocysteine + H(+). It catalyses the reaction a 3-(all-trans-polyprenyl)benzene-1,2-diol + S-adenosyl-L-methionine = a 2-methoxy-6-(all-trans-polyprenyl)phenol + S-adenosyl-L-homocysteine + H(+). It functions in the pathway cofactor biosynthesis; ubiquinone biosynthesis. O-methyltransferase that catalyzes the 2 O-methylation steps in the ubiquinone biosynthetic pathway. The polypeptide is Ubiquinone biosynthesis O-methyltransferase (Rickettsia akari (strain Hartford)).